A 385-amino-acid polypeptide reads, in one-letter code: MKILVIDIQGLIKQVFVRAFSKDNDVEILNAGFNSLNLINVFLQKFPDLVIIDENTARSNFGNSLNNVLNNISLPVVFIAQNEMLPNFGCLEQSKEKVKLIINKLNFKLTVDLFRSKYLALIKLELKNLGKNKLISSFEVKRIQAPDFSSNSKVELRENNLNDSSIRKSYRVSDVINFAPKNDPDVIIKYQGLINKHKTGKIIVVGSSTGGTEALRIFLRSFKKDSPPIIIVQHMPGGFTKSFAKNLNNEFNIDIKEAEDGDILRPGLVIIANGSYHLIVKYSSGNYFVNLLDGPLVSRHKPSVNVLFRSAAMYAGSNAIGVILTGMGDDGAVCMLEMKKNGAYTIAQDQETSVVFGMPMEAIKIGAVDKILPLSEIADHVLRRS.

The residue at position 53 (aspartate 53) is a 4-aspartylphosphate. One can recognise a CheB-type methylesterase domain in the interval 196–385 (KHKTGKIIVV…EIADHVLRRS (190 aa)). Residues serine 208, histidine 234, and aspartate 330 contribute to the active site.

Belongs to the CheB family. Post-translationally, phosphorylated by CheA. Phosphorylation of the N-terminal regulatory domain activates the methylesterase activity.

The protein resides in the cytoplasm. It catalyses the reaction [protein]-L-glutamate 5-O-methyl ester + H2O = L-glutamyl-[protein] + methanol + H(+). The catalysed reaction is L-glutaminyl-[protein] + H2O = L-glutamyl-[protein] + NH4(+). In terms of biological role, involved in chemotaxis. Part of a chemotaxis signal transduction system that modulates chemotaxis in response to various stimuli. Catalyzes the demethylation of specific methylglutamate residues introduced into the chemoreceptors (methyl-accepting chemotaxis proteins or MCP) by CheR. Also mediates the irreversible deamidation of specific glutamine residues to glutamic acid. In Borreliella burgdorferi (strain ATCC 35210 / DSM 4680 / CIP 102532 / B31) (Borrelia burgdorferi), this protein is Protein-glutamate methylesterase/protein-glutamine glutaminase.